The sequence spans 1006 residues: Unconventional myosin-Id (1006 aa).

An N-acetylalanine modification is found at alanine 2. The 687-residue stretch at phenylalanine 9–alanine 695 folds into the Myosin motor domain. Glycine 102–threonine 109 is an ATP binding site. Phosphoserine is present on serine 200. Tyrosine 536 carries the post-translational modification Phosphotyrosine. Residues methionine 572–aspartate 594 form an actin-binding region. IQ domains are found at residues valine 699–lysine 719 and threonine 721–histidine 741. The segment at leucine 776–methionine 896 is interaction with calmodulin. The TH1 domain maps to glycine 812–glycine 1005.

The protein belongs to the TRAFAC class myosin-kinesin ATPase superfamily. Myosin family. Interacts (via the two IQ motifs) with calmodulin. Binds an additional calmodulin chain via a third, C-terminal region. Interacts with F-actin. Detected on tracheal epithelial cells, and on epithelial cells and brush border cells in duodenum, jejunum and ileum. Detected on myelinated white matter in the cerebellum, and the myelinated part of the optic nerve. Detected on mature oligodendrocites. Detected on the outside of the myelin sheet that surrounds axons (at protein level). Ubiquitous. Highest levels in adult brain, and spinal cord. Moderate levels in lung, kidney, liver and spleen. Low levels in testis and heart (at protein level).

It is found in the cytoplasm. Its subcellular location is the perikaryon. It localises to the cell projection. The protein localises to the dendrite. The protein resides in the early endosome. It is found in the cell cortex. Unconventional myosin that functions as actin-based motor protein with ATPase activity. Plays a role in endosomal protein trafficking, and especially in the transfer of cargo proteins from early to recycling endosomes. Required for normal planar cell polarity in ciliated tracheal cells, for normal rotational polarity of cilia, and for coordinated, unidirectional ciliary movement in the trachea. Required for normal, polarized cilia organization in brain ependymal epithelial cells. The chain is Unconventional myosin-Id (Myo1d) from Rattus norvegicus (Rat).